Here is a 216-residue protein sequence, read N- to C-terminus: LexA repressor (216 aa).

A DNA-binding region (H-T-H motif) is located at residues 28-48 (RAEIAAELGFSSANSAEEHLR). Active-site for autocatalytic cleavage activity residues include Ser-134 and Lys-171.

Belongs to the peptidase S24 family. Homodimer.

It carries out the reaction Hydrolysis of Ala-|-Gly bond in repressor LexA.. Represses a number of genes involved in the response to DNA damage (SOS response), including recA and lexA. In the presence of single-stranded DNA, RecA interacts with LexA causing an autocatalytic cleavage which disrupts the DNA-binding part of LexA, leading to derepression of the SOS regulon and eventually DNA repair. The chain is LexA repressor from Paraburkholderia xenovorans (strain LB400).